A 535-amino-acid polypeptide reads, in one-letter code: CTP synthase (535 aa).

Residues 1-267 (MTKYIFVTGG…DQIVCDHLKL (267 aa)) form an amidoligase domain region. Residue S13 coordinates CTP. S13 lines the UTP pocket. Residue 14 to 19 (SLGKGI) participates in ATP binding. Y54 lines the L-glutamine pocket. Residue D71 participates in ATP binding. The Mg(2+) site is built by D71 and E141. Residues 148 to 150 (DIE), 188 to 193 (KTKPTQ), and K224 contribute to the CTP site. Residues 188 to 193 (KTKPTQ) and K224 contribute to the UTP site. 240-242 (RDA) contacts ATP. The 243-residue stretch at 292–534 (KIALVGKYVE…VRASITNKES (243 aa)) folds into the Glutamine amidotransferase type-1 domain. Residue G354 coordinates L-glutamine. The Nucleophile; for glutamine hydrolysis role is filled by C381. L-glutamine-binding positions include 382–385 (LGMQ), E405, and R462. Residues H507 and E509 contribute to the active site.

The protein belongs to the CTP synthase family. Homotetramer.

It catalyses the reaction UTP + L-glutamine + ATP + H2O = CTP + L-glutamate + ADP + phosphate + 2 H(+). The enzyme catalyses L-glutamine + H2O = L-glutamate + NH4(+). It carries out the reaction UTP + NH4(+) + ATP = CTP + ADP + phosphate + 2 H(+). Its pathway is pyrimidine metabolism; CTP biosynthesis via de novo pathway; CTP from UDP: step 2/2. Allosterically activated by GTP, when glutamine is the substrate; GTP has no effect on the reaction when ammonia is the substrate. The allosteric effector GTP functions by stabilizing the protein conformation that binds the tetrahedral intermediate(s) formed during glutamine hydrolysis. Inhibited by the product CTP, via allosteric rather than competitive inhibition. Its function is as follows. Catalyzes the ATP-dependent amination of UTP to CTP with either L-glutamine or ammonia as the source of nitrogen. Regulates intracellular CTP levels through interactions with the four ribonucleotide triphosphates. The polypeptide is CTP synthase (Bacillus cereus (strain AH820)).